Here is a 313-residue protein sequence, read N- to C-terminus: Pantothenate synthetase (313 aa).

ATP is bound at residue 43-50 (MGALHEGH). The active-site Proton donor is the H50. Residue Q75 participates in (R)-pantoate binding. Q75 is a beta-alanine binding site. 161–164 (GEKD) contributes to the ATP binding site. Residue Q167 participates in (R)-pantoate binding. Residues V190 and 198 to 201 (LSSR) contribute to the ATP site.

It belongs to the pantothenate synthetase family. In terms of assembly, homodimer.

It is found in the cytoplasm. It catalyses the reaction (R)-pantoate + beta-alanine + ATP = (R)-pantothenate + AMP + diphosphate + H(+). The protein operates within cofactor biosynthesis; (R)-pantothenate biosynthesis; (R)-pantothenate from (R)-pantoate and beta-alanine: step 1/1. Catalyzes the condensation of pantoate with beta-alanine in an ATP-dependent reaction via a pantoyl-adenylate intermediate. In Mycobacterium sp. (strain KMS), this protein is Pantothenate synthetase.